The chain runs to 217 residues: uncharacterized protein (217 aa).

The next 4 helical transmembrane spans lie at 9–29 (ISLA…LSTI), 54–74 (FLST…LLEL), 103–125 (LMAY…RFLS), and 135–157 (IVFW…ASYI).

This sequence belongs to the DP1 family.

The protein resides in the endoplasmic reticulum membrane. This is an uncharacterized protein from Schizosaccharomyces pombe (strain 972 / ATCC 24843) (Fission yeast).